We begin with the raw amino-acid sequence, 398 residues long: Succinate--CoA ligase [ADP-forming] subunit beta (398 aa).

The ATP-grasp domain maps to 9–253 (MALLNERGVS…AGASDPLEQE (245 aa)). ATP-binding positions include Lys-46, 53 to 55 (GRG), Val-111, and Glu-116. Positions 208 and 222 each coordinate Mg(2+). Substrate is bound by residues Asn-273 and 330–332 (GIM).

Belongs to the succinate/malate CoA ligase beta subunit family. As to quaternary structure, heterotetramer of two alpha and two beta subunits. It depends on Mg(2+) as a cofactor.

The enzyme catalyses succinate + ATP + CoA = succinyl-CoA + ADP + phosphate. The catalysed reaction is GTP + succinate + CoA = succinyl-CoA + GDP + phosphate. It participates in carbohydrate metabolism; tricarboxylic acid cycle; succinate from succinyl-CoA (ligase route): step 1/1. Succinyl-CoA synthetase functions in the citric acid cycle (TCA), coupling the hydrolysis of succinyl-CoA to the synthesis of either ATP or GTP and thus represents the only step of substrate-level phosphorylation in the TCA. The beta subunit provides nucleotide specificity of the enzyme and binds the substrate succinate, while the binding sites for coenzyme A and phosphate are found in the alpha subunit. The protein is Succinate--CoA ligase [ADP-forming] subunit beta of Zymomonas mobilis subsp. mobilis (strain ATCC 31821 / ZM4 / CP4).